Here is a 625-residue protein sequence, read N- to C-terminus: tRNA uridine 5-carboxymethylaminomethyl modification enzyme MnmG (625 aa).

Position 11-16 (11-16 (GAGHAG)) interacts with FAD. An NAD(+)-binding site is contributed by 271-285 (GPRYCPSIETKIVTF).

The protein belongs to the MnmG family. In terms of assembly, homodimer. Heterotetramer of two MnmE and two MnmG subunits. FAD serves as cofactor.

The protein resides in the cytoplasm. In terms of biological role, NAD-binding protein involved in the addition of a carboxymethylaminomethyl (cmnm) group at the wobble position (U34) of certain tRNAs, forming tRNA-cmnm(5)s(2)U34. In Porphyromonas gingivalis (strain ATCC BAA-308 / W83), this protein is tRNA uridine 5-carboxymethylaminomethyl modification enzyme MnmG.